We begin with the raw amino-acid sequence, 297 residues long: HTH-type transcriptional regulator ArgP (297 aa).

Positions 4–60 constitute an HTH lysR-type domain; it reads PDYRTLQALDAVIRERGFERAAQKLCITQSAVSQRIKQLENLFGQPLLVRTVPPRPT. Residues 21 to 40 constitute a DNA-binding region (H-T-H motif); it reads FERAAQKLCITQSAVSQRIK.

Belongs to the LysR transcriptional regulatory family. In terms of assembly, homodimer.

In terms of biological role, controls the transcription of genes involved in arginine and lysine metabolism. This is HTH-type transcriptional regulator ArgP from Yersinia enterocolitica serotype O:8 / biotype 1B (strain NCTC 13174 / 8081).